We begin with the raw amino-acid sequence, 324 residues long: UDP-N-acetylenolpyruvoylglucosamine reductase (324 aa).

Residues 36 to 217 (FRAGGLAELM…IRAEMDAVRA (182 aa)) enclose the FAD-binding PCMH-type domain. The active site involves Arg183. Ser232 functions as the Proton donor in the catalytic mechanism. The active site involves Glu302.

This sequence belongs to the MurB family. FAD is required as a cofactor.

It localises to the cytoplasm. It carries out the reaction UDP-N-acetyl-alpha-D-muramate + NADP(+) = UDP-N-acetyl-3-O-(1-carboxyvinyl)-alpha-D-glucosamine + NADPH + H(+). The protein operates within cell wall biogenesis; peptidoglycan biosynthesis. Its function is as follows. Cell wall formation. This Rhizobium rhizogenes (strain K84 / ATCC BAA-868) (Agrobacterium radiobacter) protein is UDP-N-acetylenolpyruvoylglucosamine reductase.